A 128-amino-acid polypeptide reads, in one-letter code: ATP synthase epsilon chain (128 aa).

Positions 98–128 are disordered; it reads EALDMPSSTPEQAQIKDAAVRRARGQLRASR. Positions 118-128 are enriched in basic residues; it reads RRARGQLRASR.

It belongs to the ATPase epsilon chain family. F-type ATPases have 2 components, CF(1) - the catalytic core - and CF(0) - the membrane proton channel. CF(1) has five subunits: alpha(3), beta(3), gamma(1), delta(1), epsilon(1). CF(0) has three main subunits: a, b and c.

Its subcellular location is the cell inner membrane. Produces ATP from ADP in the presence of a proton gradient across the membrane. This is ATP synthase epsilon chain from Rhodopirellula baltica (strain DSM 10527 / NCIMB 13988 / SH1).